Here is a 307-residue protein sequence, read N- to C-terminus: Methionyl-tRNA formyltransferase (307 aa).

Residue 109-112 (SMLP) participates in (6S)-5,6,7,8-tetrahydrofolate binding.

This sequence belongs to the Fmt family.

It carries out the reaction L-methionyl-tRNA(fMet) + (6R)-10-formyltetrahydrofolate = N-formyl-L-methionyl-tRNA(fMet) + (6S)-5,6,7,8-tetrahydrofolate + H(+). In terms of biological role, attaches a formyl group to the free amino group of methionyl-tRNA(fMet). The formyl group appears to play a dual role in the initiator identity of N-formylmethionyl-tRNA by promoting its recognition by IF2 and preventing the misappropriation of this tRNA by the elongation apparatus. This Orientia tsutsugamushi (strain Boryong) (Rickettsia tsutsugamushi) protein is Methionyl-tRNA formyltransferase.